A 159-amino-acid chain; its full sequence is Troponin C, skeletal muscle (159 aa).

Thr-1 carries the post-translational modification N-acetylthreonine. 4 EF-hand domains span residues 14-49, 50-85, 90-125, and 126-159; these read EMIAEFKAAFDMFDADGGGDISVKELGTVMRMLGQT, PTKEELDAIIEEVDEDGSGTIDFEEFLVMMVRQMKE, KSEEELAECFRIFDRNMDGYIDAEELAEIFRASGEH, and VTDEEIESIMKDGDKNNDGRIDFDEFLKMMEGVQ. Ca(2+) contacts are provided by Asp-27, Asp-29, Asp-33, Glu-38, Asp-63, Asp-65, Ser-67, Thr-69, Glu-74, Asp-103, Asn-105, Asp-107, Tyr-109, Glu-114, Asp-139, Asn-141, Asp-143, Arg-145, and Glu-150.

The protein belongs to the troponin C family.

In terms of biological role, troponin is the central regulatory protein of striated muscle contraction. Tn consists of three components: Tn-I which is the inhibitor of actomyosin ATPase, Tn-T which contains the binding site for tropomyosin and Tn-C. The binding of calcium to Tn-C abolishes the inhibitory action of Tn on actin filaments. The polypeptide is Troponin C, skeletal muscle (TNNC2) (Sus scrofa (Pig)).